The sequence spans 313 residues: Ribosomal RNA small subunit methyltransferase H (313 aa).

Residues 33 to 35 (AGH), Glu52, Phe80, Asp101, and Gln108 each bind S-adenosyl-L-methionine.

It belongs to the methyltransferase superfamily. RsmH family.

The protein localises to the cytoplasm. It carries out the reaction cytidine(1402) in 16S rRNA + S-adenosyl-L-methionine = N(4)-methylcytidine(1402) in 16S rRNA + S-adenosyl-L-homocysteine + H(+). Its function is as follows. Specifically methylates the N4 position of cytidine in position 1402 (C1402) of 16S rRNA. This is Ribosomal RNA small subunit methyltransferase H from Spiroplasma kunkelii.